The primary structure comprises 432 residues: Glutamate-1-semialdehyde 2,1-aminomutase (432 aa).

K269 is modified (N6-(pyridoxal phosphate)lysine).

The protein belongs to the class-III pyridoxal-phosphate-dependent aminotransferase family. HemL subfamily. As to quaternary structure, homodimer. The cofactor is pyridoxal 5'-phosphate.

The protein resides in the cytoplasm. It carries out the reaction (S)-4-amino-5-oxopentanoate = 5-aminolevulinate. The protein operates within porphyrin-containing compound metabolism; protoporphyrin-IX biosynthesis; 5-aminolevulinate from L-glutamyl-tRNA(Glu): step 2/2. This Desulforudis audaxviator (strain MP104C) protein is Glutamate-1-semialdehyde 2,1-aminomutase.